Consider the following 501-residue polypeptide: Cytochrome P450 2J1 (501 aa).

Cys-447 lines the heme pocket.

The protein belongs to the cytochrome P450 family. The cofactor is heme. As to expression, small intestine.

The protein resides in the endoplasmic reticulum membrane. It is found in the microsome membrane. The enzyme catalyses an organic molecule + reduced [NADPH--hemoprotein reductase] + O2 = an alcohol + oxidized [NADPH--hemoprotein reductase] + H2O + H(+). Functionally, catalyzes the N-demethylation of benzphetamine to formaldehyde. The sequence is that of Cytochrome P450 2J1 (CYP2J1) from Oryctolagus cuniculus (Rabbit).